We begin with the raw amino-acid sequence, 127 residues long: Aspartate 1-decarboxylase (127 aa).

The Schiff-base intermediate with substrate; via pyruvic acid role is filled by Ser-25. Pyruvic acid (Ser) is present on Ser-25. Thr-57 lines the substrate pocket. Tyr-58 serves as the catalytic Proton donor. A substrate-binding site is contributed by 73-75; it reads GAA.

The protein belongs to the PanD family. As to quaternary structure, heterooctamer of four alpha and four beta subunits. It depends on pyruvate as a cofactor. In terms of processing, is synthesized initially as an inactive proenzyme, which is activated by self-cleavage at a specific serine bond to produce a beta-subunit with a hydroxyl group at its C-terminus and an alpha-subunit with a pyruvoyl group at its N-terminus.

Its subcellular location is the cytoplasm. It carries out the reaction L-aspartate + H(+) = beta-alanine + CO2. Its pathway is cofactor biosynthesis; (R)-pantothenate biosynthesis; beta-alanine from L-aspartate: step 1/1. In terms of biological role, catalyzes the pyruvoyl-dependent decarboxylation of aspartate to produce beta-alanine. The chain is Aspartate 1-decarboxylase from Bacillus cereus (strain ATCC 10987 / NRS 248).